Consider the following 22-residue polypeptide: Caerin-3.2 (22 aa).

Lys22 bears the Lysine amide mark.

Expressed by the skin parotoid and/or rostral glands.

It localises to the secreted. In terms of biological role, antibacterial peptide, that adopts an alpha helical conformation which can disrupt bacterial membranes. Each caerin displays a different antimicrobial specificity. The polypeptide is Caerin-3.2 (Ranoidea caerulea (Green tree frog)).